Consider the following 122-residue polypeptide: UPF0102 protein BARBAKC583_1042 (122 aa).

This sequence belongs to the UPF0102 family.

The polypeptide is UPF0102 protein BARBAKC583_1042 (Bartonella bacilliformis (strain ATCC 35685 / KC583 / Herrer 020/F12,63)).